The sequence spans 278 residues: MNPTQSDELRDEPRGAIELPVSRTRGGAVDTAHDFVGQEWPVALVFNGISHAVMMCTPCDLEAFAVGFAISEGIVARGSDIKDIEVILHADAPLPHAEVHLDVVQQAFAALKDRRRALAGRTGCGVCGIESIDLLDLAPERVPDTGFLARLAPDALARAAHALPAHQALTKLTGGLHAAAWCDATGAIRAAFEDVGRHNALDKLIGSLVLSRADTTDGFVFLSSRASYELVRKAARVGIPLVATISAPSSLAIEIAKAAGLRLVSFCRETGHVDYGTV.

The active-site Cysteine persulfide intermediate is Cys124.

Belongs to the FdhD family.

It localises to the cytoplasm. Required for formate dehydrogenase (FDH) activity. Acts as a sulfur carrier protein that transfers sulfur from IscS to the molybdenum cofactor prior to its insertion into FDH. The sequence is that of Sulfur carrier protein FdhD from Burkholderia cenocepacia (strain ATCC BAA-245 / DSM 16553 / LMG 16656 / NCTC 13227 / J2315 / CF5610) (Burkholderia cepacia (strain J2315)).